The primary structure comprises 116 residues: uncharacterized protein (116 aa).

2 disordered regions span residues 1 to 26 (MLLT…KSSN) and 74 to 116 (ENDL…KSSI). The segment covering 14–26 (SANSTDDSSKSSN) has biased composition (low complexity). Positions 74 to 86 (ENDLKRSKSQGRE) are enriched in basic and acidic residues. The span at 104–116 (NTASEIQRTKSSI) shows a compositional bias: polar residues.

This is an uncharacterized protein from Saccharomyces cerevisiae (strain ATCC 204508 / S288c) (Baker's yeast).